A 454-amino-acid chain; its full sequence is Trichosetin biosynthesis cluster transcription factor TF22 (454 aa).

The segment at residues 13 to 47 (CDRCRSHKLKCTVSPEDSRSGPHKCTRCIRAQVTC) is a DNA-binding region (zn(2)-C6 fungal-type). Residues 51-89 (PRSQSKRTPNGKNKPEKPKPELEPPQKTSPPVCSSSLAG) are disordered. The segment covering 52–61 (RSQSKRTPNG) has biased composition (polar residues). A compositionally biased stretch (basic and acidic residues) spans 63–74 (NKPEKPKPELEP).

The protein resides in the nucleus. Transcription factor that regulates the expression of the gene cluster that mediates the biosynthesis of trichosetin, a trans-fused decalin-containing tetramic acid with antimicrobial activity. Directly activates expression of only the three biosynthetic genes PKS-NRPS1, DA and ER, while TF23 and MFS-T are induced by the final product trichosetin and not by TF22. This chain is Trichosetin biosynthesis cluster transcription factor TF22, found in Gibberella fujikuroi (strain CBS 195.34 / IMI 58289 / NRRL A-6831) (Bakanae and foot rot disease fungus).